The primary structure comprises 398 residues: Secreted aspartic protease 2 (398 aa).

The signal sequence occupies residues 1–18 (MFLKNIFIALAIALLVDA). Positions 19–56 (TPTTTKRSAGFVALDFSVVKTPKAFPVTNGQEGKTSKR) are cleaved as a propeptide — activation peptide. Residues 70 to 384 (YAADITVGSN…DLDDNEISLA (315 aa)) enclose the Peptidase A1 domain. Asp-88 is an active-site residue. Pepstatin A is bound at residue 88-90 (DTG). Cys-103 and Cys-115 are joined by a disulfide. 141–142 (GD) is a pepstatin A binding site. Zn(2+)-binding residues include Asp-247 and Asp-270. Asp-274 is an active-site residue. 274–278 (DSGTT) is a pepstatin A binding site. The cysteines at positions 312 and 350 are disulfide-linked. N-linked (GlcNAc...) asparagine glycosylation is found at Asn-313 and Asn-321.

Belongs to the peptidase A1 family. Monomer.

It localises to the secreted. It carries out the reaction Preferential cleavage at the carboxyl of hydrophobic amino acids, but fails to cleave 15-Leu-|-Tyr-16, 16-Tyr-|-Leu-17 and 24-Phe-|-Phe-25 of insulin B chain. Activates trypsinogen, and degrades keratin.. In terms of biological role, secreted aspartic peptidases (SAPs) are a group of ten acidic hydrolases considered as key virulence factors. These enzymes supply the fungus with nutrient amino acids as well as are able to degrade the selected host's proteins involved in the immune defense. Induces host inflammatory cytokine production in a proteolytic activity-independent way. Plays a role in tissue damage during superficial infection. Moreover, acts toward human hemoglobin though limited proteolysis to generate a variety of antimicrobial hemocidins, enabling to compete with the other microorganisms of the same physiological niche using the microbicidal peptides generated from the host protein. Plays a key role in defense against host by cleaving histatin-5 (Hst 5), a peptide from human saliva that carries out fungicidal activity. The cleavage rate decreases in an order of SAP2 &gt; SAP9 &gt; SAP3 &gt; SAP7 &gt; SAP4 &gt; SAP1 &gt; SAP8. The first cleavage occurs between residues 'Lys-17' and 'His-18' of Hst 5, giving DSHAKRHHGYKRKFHEK and HHSHRGY peptides. Simultaneously, the DSHAKRHHGYKRK peptide is also formed. Further fragmentation by SAP2 results in FHEK and DSHAKRHHGY products. The polypeptide is Secreted aspartic protease 2 (Candida albicans (Yeast)).